The sequence spans 472 residues: Eukaryotic translation initiation factor 2 subunit 3 (472 aa).

Ala-2 bears the N-acetylalanine mark. The residue at position 16 (Ser-16) is a Phosphoserine. In terms of domain architecture, tr-type G spans 39 to 248; sequence QATINIGTIG…IVKKIPVPPR (210 aa). A G1 region spans residues 48 to 55; the sequence is GHVAHGKS. 51–56 serves as a coordination point for GTP; that stretch reads AHGKST. Residues 76–80 form a G2 region; the sequence is NITIK. Positions 134–137 are G3; it reads DCPG. GTP contacts are provided by residues 190 to 193 and 225 to 227; these read NKID and SAQ. The G4 stretch occupies residues 190-193; that stretch reads NKID. Positions 225-227 are G5; that stretch reads SAQ. Residues 457 to 469 are interacts with CDC123; sequence GQIRRGVTIKPTV.

Belongs to the TRAFAC class translation factor GTPase superfamily. Classic translation factor GTPase family. EIF2G subfamily. Eukaryotic translation initiation factor 2 eIF2 is a heterotrimeric complex composed of an alpha (EIF2S1), a beta (EIF2S2) and a gamma (EIF2S3) chain. eIF2 is member of the 43S pre-initiation complex (43S PIC). Interacts (via C-terminus) with CDC123; the interaction is direct.

It is found in the cytoplasm. It localises to the cytosol. The enzyme catalyses GTP + H2O = GDP + phosphate + H(+). Member of the eIF2 complex that functions in the early steps of protein synthesis by forming a ternary complex with GTP and initiator tRNA. This complex binds to a 40S ribosomal subunit, followed by mRNA binding to form the 43S pre-initiation complex (43S PIC). Junction of the 60S ribosomal subunit to form the 80S initiation complex is preceded by hydrolysis of the GTP bound to eIF2 and release of an eIF2-GDP binary complex. In order for eIF2 to recycle and catalyze another round of initiation, the GDP bound to eIF2 must exchange with GTP by way of a reaction catalyzed by eIF-2B. This Pongo abelii (Sumatran orangutan) protein is Eukaryotic translation initiation factor 2 subunit 3 (EIF2S3).